Here is a 114-residue protein sequence, read N- to C-terminus: Ribonuclease P protein component (114 aa).

Belongs to the RnpA family. In terms of assembly, consists of a catalytic RNA component (M1 or rnpB) and a protein subunit.

The enzyme catalyses Endonucleolytic cleavage of RNA, removing 5'-extranucleotides from tRNA precursor.. Functionally, RNaseP catalyzes the removal of the 5'-leader sequence from pre-tRNA to produce the mature 5'-terminus. It can also cleave other RNA substrates such as 4.5S RNA. The protein component plays an auxiliary but essential role in vivo by binding to the 5'-leader sequence and broadening the substrate specificity of the ribozyme. The sequence is that of Ribonuclease P protein component from Exiguobacterium sp. (strain ATCC BAA-1283 / AT1b).